Here is a 610-residue protein sequence, read N- to C-terminus: Ectonucleoside triphosphate diphosphohydrolase 7 (610 aa).

The Cytoplasmic portion of the chain corresponds to 1–28 (MARISFSCLFPASWHCSLPSVTQFSRQR). A helical membrane pass occupies residues 29-49 (VALLIISVAVFILVFAAVADL). Topologically, residues 50–555 (QLWSSRAFRD…VSWFRISFVY (506 aa)) are vesicular. The active-site Proton acceptor is the E217. N-linked (GlcNAc...) asparagine glycosylation is found at N336 and N400. The cysteines at positions 454 and 483 are disulfide-linked. Residues 556-576 (NHYLFFACILVVLLSIVLYIL) form a helical membrane-spanning segment. The Cytoplasmic portion of the chain corresponds to 577 to 610 (RLRRIHRRQARASALDLLLMEEGVHTVLEPGIPT).

The protein belongs to the GDA1/CD39 NTPase family. Ca(2+) serves as cofactor. Mg(2+) is required as a cofactor.

It is found in the cytoplasmic vesicle membrane. The enzyme catalyses a ribonucleoside 5'-triphosphate + H2O = a ribonucleoside 5'-diphosphate + phosphate + H(+). It carries out the reaction UTP + H2O = UDP + phosphate + H(+). It catalyses the reaction GTP + H2O = GDP + phosphate + H(+). The catalysed reaction is CTP + H2O = CDP + phosphate + H(+). Functionally, catalyzes the hydrolysis of nucleoside triphosphates and diphosphates in a calcium- or magnesium-dependent manner. Preferentially hydrolyzes nucleoside 5'-triphosphates, with substrate preference for UTP &gt; GTP &gt; CTP. Hydrolyzes ATP and nucleoside diphosphates only to a minor extent. The protein is Ectonucleoside triphosphate diphosphohydrolase 7 (entpd7) of Xenopus tropicalis (Western clawed frog).